The following is a 327-amino-acid chain: Zinc transport protein ZntB (327 aa).

Residues 1 to 273 (MEAIKGSEVN…SRRSYTMSLM (273 aa)) are Cytoplasmic-facing. The helical transmembrane segment at 274–294 (AMVFLPSTFLTGLFGVNLGGI) threads the bilayer. The Periplasmic segment spans residues 295–300 (PGGGWH). Residues 301 to 321 (LGFSVFCVALVLLIGGVTWWL) form a helical membrane-spanning segment. Topologically, residues 322 to 327 (HRSKWL) are cytoplasmic.

The protein belongs to the CorA metal ion transporter (MIT) (TC 1.A.35) family.

It localises to the cell inner membrane. It carries out the reaction Zn(2+)(out) + H(+)(out) = Zn(2+)(in) + H(+)(in). In terms of biological role, zinc transporter. Acts as a Zn(2+):proton symporter, which likely mediates zinc ion uptake. This Cronobacter sakazakii (strain ATCC BAA-894) (Enterobacter sakazakii) protein is Zinc transport protein ZntB.